Here is a 195-residue protein sequence, read N- to C-terminus: Dephospho-CoA kinase (195 aa).

The region spanning 2-195 (IIGLTGGIGV…DIVDSLSLSS (194 aa)) is the DPCK domain. 10 to 15 (GVGKSF) lines the ATP pocket.

The protein belongs to the CoaE family.

The protein resides in the cytoplasm. It carries out the reaction 3'-dephospho-CoA + ATP = ADP + CoA + H(+). The protein operates within cofactor biosynthesis; coenzyme A biosynthesis; CoA from (R)-pantothenate: step 5/5. Its function is as follows. Catalyzes the phosphorylation of the 3'-hydroxyl group of dephosphocoenzyme A to form coenzyme A. The sequence is that of Dephospho-CoA kinase from Wolbachia sp. subsp. Brugia malayi (strain TRS).